A 266-amino-acid chain; its full sequence is DNA damage-regulated autophagy modulator protein 2 (266 aa).

A run of 6 helical transmembrane segments spans residues 8–28, 53–73, 88–108, 118–138, 160–180, and 207–227; these read LSFL…FSYI, KCLF…TIYV, IIKL…GLSI, FAAH…YMFV, LLLV…SSVL, and ITTA…LTYI.

Belongs to the DRAM/TMEM150 family. As to expression, expression is down-regulated in ovarian tumors (at protein level). Widely expressed with highest levels in placenta and heart. Expressed in the retina. Not detected in brain or thymus.

The protein localises to the lysosome membrane. It is found in the photoreceptor inner segment. Its subcellular location is the apical cell membrane. In terms of biological role, plays a role in the initiation of autophagy. In the retina, might be involved in the process of photoreceptor cells renewal and recycling to preserve visual function. Induces apoptotic cell death when coexpressed with DRAM1. This is DNA damage-regulated autophagy modulator protein 2 (DRAM2) from Homo sapiens (Human).